The primary structure comprises 96 residues: Large ribosomal subunit protein bL27 (96 aa).

Residues 1 to 11 (MLKTLENLQLF) constitute a propeptide that is removed on maturation. The disordered stretch occupies residues 13–36 (HKKGGGSTSNGRDSQAKRLGAKAA).

It belongs to the bacterial ribosomal protein bL27 family. The N-terminus is cleaved by ribosomal processing cysteine protease Prp.

This chain is Large ribosomal subunit protein bL27, found in Streptococcus thermophilus (strain CNRZ 1066).